Consider the following 718-residue polypeptide: Heat shock 70 kDa protein 7, chloroplastic (718 aa).

Residues 1–92 constitute a chloroplast transit peptide; it reads MASSAAQIHI…IDLGTTNSAV (92 aa). Residues 668 to 678 are compositionally biased toward polar residues; sequence QIGQSLYNQPQ. The tract at residues 668 to 718 is disordered; the sequence is QIGQSLYNQPQPGGADSPPGGEASSSSDTSSSAKGGDNGGDVIDADFTDSN.

This sequence belongs to the heat shock protein 70 (TC 1.A.33) family. DnaK subfamily.

The protein resides in the plastid. The protein localises to the chloroplast stroma. In terms of biological role, acts redundantly with HSP70-6 in the thermotolerance of germinating seeds. Plays an important role in the protein precursor import into chloroplasts. Its function is as follows. In cooperation with other chaperones, Hsp70s are key components that facilitate folding of de novo synthesized proteins, assist translocation of precursor proteins into organelles, and are responsible for degradation of damaged protein under stress conditions. The protein is Heat shock 70 kDa protein 7, chloroplastic (HSP70-7) of Arabidopsis thaliana (Mouse-ear cress).